Reading from the N-terminus, the 121-residue chain is MNKRNHIRLPPEVNRLLYVRNLPYKITSDEMYDIFGKFGAIRQIRVGNTPETRGTAFVVYEDIFDAKNACDHLSGFNVCNRYLVVLYYQSNKAFKRVDMDKKQEELNNIKAKYNLKTPEAP.

The tract at residues 12-25 (EVNRLLYVRNLPYK) is interaction with pre-mRNA branch site. Residues 15–90 (RLLYVRNLPY…RYLVVLYYQS (76 aa)) enclose the RRM domain.

This sequence belongs to the SF3B6 family. As to quaternary structure, component of splicing factor SF3B complex. Component of the U11/U12 snRNPs that are part of the U12-type spliceosome.

The protein resides in the nucleus. In terms of biological role, involved in pre-mRNA splicing as a component of the splicing factor SF3B complex. SF3B complex is required for 'A' complex assembly formed by the stable binding of U2 snRNP to the branchpoint sequence (BPS) in pre-mRNA. Directly contacts the pre-mRNA branch site adenosine for the first catalytic step of splicing. Enters the spliceosome and associates with the pre-mRNA branch site as part of the 17S U2 or, in the case of the minor spliceosome, as part of the 18S U11/U12 snRNP complex, and thus may facilitate the interaction of these snRNP with the branch sites of U2 and U12 respectively. The sequence is that of Splicing factor 3B subunit 6 from Drosophila melanogaster (Fruit fly).